The following is a 223-amino-acid chain: Endonuclease NucS (223 aa).

The protein belongs to the NucS endonuclease family.

Its subcellular location is the cytoplasm. Its function is as follows. Cleaves both 3' and 5' ssDNA extremities of branched DNA structures. This is Endonuclease NucS from Streptomyces coelicolor (strain ATCC BAA-471 / A3(2) / M145).